The following is a 313-amino-acid chain: ADP-L-glycero-D-manno-heptose-6-epimerase (313 aa).

Residues 10 to 11 (MI), 31 to 32 (DN), lysine 38, arginine 53, 75 to 79 (EGACS), and asparagine 92 contribute to the NADP(+) site. The active-site Proton acceptor is the tyrosine 139. Residue lysine 143 coordinates NADP(+). Asparagine 174 contributes to the substrate binding site. Residues valine 175 and lysine 183 each contribute to the NADP(+) site. The active-site Proton acceptor is lysine 183. Substrate is bound by residues serine 185, histidine 192, 206–209 (FAGS), arginine 214, and tyrosine 277.

It belongs to the NAD(P)-dependent epimerase/dehydratase family. HldD subfamily. As to quaternary structure, homopentamer. NADP(+) serves as cofactor.

The catalysed reaction is ADP-D-glycero-beta-D-manno-heptose = ADP-L-glycero-beta-D-manno-heptose. Its pathway is nucleotide-sugar biosynthesis; ADP-L-glycero-beta-D-manno-heptose biosynthesis; ADP-L-glycero-beta-D-manno-heptose from D-glycero-beta-D-manno-heptose 7-phosphate: step 4/4. Its function is as follows. Catalyzes the interconversion between ADP-D-glycero-beta-D-manno-heptose and ADP-L-glycero-beta-D-manno-heptose via an epimerization at carbon 6 of the heptose. The sequence is that of ADP-L-glycero-D-manno-heptose-6-epimerase from Vibrio campbellii (strain ATCC BAA-1116).